The chain runs to 229 residues: Potassium/proton antiporter CemA (229 aa).

3 consecutive transmembrane segments (helical) span residues 6 to 26 (AFIP…ISLC), 107 to 127 (ILHF…SFWG), and 189 to 209 (ILSG…KYWI).

It belongs to the CemA family.

The protein resides in the plastid. It localises to the chloroplast inner membrane. It carries out the reaction K(+)(in) + H(+)(out) = K(+)(out) + H(+)(in). Contributes to K(+)/H(+) antiport activity by supporting proton efflux to control proton extrusion and homeostasis in chloroplasts in a light-dependent manner to modulate photosynthesis. Prevents excessive induction of non-photochemical quenching (NPQ) under continuous-light conditions. Indirectly promotes efficient inorganic carbon uptake into chloroplasts. In Arabidopsis thaliana (Mouse-ear cress), this protein is Potassium/proton antiporter CemA.